The primary structure comprises 691 residues: Elongation factor G (691 aa).

A tr-type G domain is found at 8–283; the sequence is KKVRNIGIAA…AVVAYLPAPD (276 aa). Residues 17–24, 81–85, and 135–138 contribute to the GTP site; these read AHIDAGKT, DTPGH, and NKMD.

This sequence belongs to the TRAFAC class translation factor GTPase superfamily. Classic translation factor GTPase family. EF-G/EF-2 subfamily.

It localises to the cytoplasm. In terms of biological role, catalyzes the GTP-dependent ribosomal translocation step during translation elongation. During this step, the ribosome changes from the pre-translocational (PRE) to the post-translocational (POST) state as the newly formed A-site-bound peptidyl-tRNA and P-site-bound deacylated tRNA move to the P and E sites, respectively. Catalyzes the coordinated movement of the two tRNA molecules, the mRNA and conformational changes in the ribosome. This is Elongation factor G from Campylobacter jejuni subsp. doylei (strain ATCC BAA-1458 / RM4099 / 269.97).